The following is a 303-amino-acid chain: Recombination-associated protein RdgC (303 aa).

This sequence belongs to the RdgC family.

Its subcellular location is the cytoplasm. It is found in the nucleoid. In terms of biological role, may be involved in recombination. In Pseudoalteromonas translucida (strain TAC 125), this protein is Recombination-associated protein RdgC.